We begin with the raw amino-acid sequence, 2095 residues long: Oxygen-regulated protein 1 (2095 aa).

Doublecortin domains lie at 35–117 (KRIS…VDLD) and 157–236 (RRLV…GNYD). Disordered stretches follow at residues 358-379 (GLSN…DYGP), 643-688 (ENRK…GKIP), 863-887 (GAEV…PDFP), 1400-1430 (NKKK…SSER), and 1572-1595 (SGYP…EPTR). Residues 1405 to 1419 (ISSDKEESRTSEEPR) show a composition bias toward basic and acidic residues. The segment covering 1420-1430 (SITNSMTSSER) has biased composition (polar residues). The segment covering 1583-1595 (HNDDSGQEKEPTR) has biased composition (basic and acidic residues).

In terms of assembly, interacts (via the doublecortin domains) with microtubules. Interacts with RP1L1. Interacts with MAK. As to expression, expressed in the cell bodies and inner segments of photoreceptors. Not found in liver, spleen, kidney, brain, thymus, muscle, heart, lung and testis.

The protein resides in the cytoplasm. The protein localises to the cytoskeleton. It localises to the cilium axoneme. It is found in the cell projection. Its subcellular location is the cilium. The protein resides in the photoreceptor outer segment. Microtubule-associated protein regulating the stability and length of the microtubule-based axoneme of photoreceptors. Required for the differentiation of photoreceptor cells, it plays a role in the organization of the outer segment of rod and cone photoreceptors ensuring the correct orientation and higher-order stacking of outer segment disks along the photoreceptor axoneme. The protein is Oxygen-regulated protein 1 (Rp1) of Mus musculus (Mouse).